The chain runs to 513 residues: MTLLPGDNSDYDYSALSCTSDASFHPAFLPQRQAIKGAFYRRAQRLRPQDEPRQGCQPEDRRRRIIINVGGIKYSLPWTTLDEFPLTRLGQLKACTNFDDILNVCDDYDVTCNEFFFDRNPGAFGTILTFLRAGKLRLLREMCALSFQEELLYWGIAEDHLDGCCKRRYLQKIEEFAEMVEREEEDDALDSEGRDSEGPAEGEGRLGRCMRRLRDMVERPHSGLPGKVFACLSVLFVTVTAVNLSVSTLPSLREEEEQGHCSQMCHNVFIVESVCVGWFSLEFLLRLIQAPSKFAFLRSPLTLIDLVAILPYYITLLVDGAAAGRRKPGAGNSYLDKVGLVLRVLRALRILYVMRLARHSLGLQTLGLTARRCTREFGLLLLFLCVAIALFAPLLYVIENEMADSPEFTSIPACYWWAVITMTTVGYGDMVPRSTPGQVVALSSILSGILLMAFPVTSIFHTFSRSYLELKQEQERVMFRRAQFLIKTKSQLSVSQDSDILFGSASSDTRDNN.

Topologically, residues 1 to 224 are cytoplasmic; that stretch reads MTLLPGDNSD…DMVERPHSGL (224 aa). Residues 184-204 are disordered; it reads EEDDALDSEGRDSEGPAEGEG. Positions 191–204 are enriched in basic and acidic residues; it reads SEGRDSEGPAEGEG. A helical transmembrane segment spans residues 225 to 246; the sequence is PGKVFACLSVLFVTVTAVNLSV. Residues 247 to 267 are Extracellular-facing; sequence STLPSLREEEEQGHCSQMCHN. A helical transmembrane segment spans residues 268 to 289; it reads VFIVESVCVGWFSLEFLLRLIQ. The Cytoplasmic segment spans residues 290 to 300; sequence APSKFAFLRSP. Residues 301–321 traverse the membrane as a helical segment; it reads LTLIDLVAILPYYITLLVDGA. Over 322-338 the chain is Extracellular; sequence AAGRRKPGAGNSYLDKV. The chain crosses the membrane as a helical; Voltage-sensor span at residues 339–359; the sequence is GLVLRVLRALRILYVMRLARH. The Cytoplasmic segment spans residues 360-374; the sequence is SLGLQTLGLTARRCT. A helical transmembrane segment spans residues 375 to 396; it reads REFGLLLLFLCVAIALFAPLLY. The Extracellular portion of the chain corresponds to 397–411; it reads VIENEMADSPEFTSI. Positions 412 to 423 form an intramembrane region, helical; the sequence is PACYWWAVITMT. The short motif at 424 to 429 is the Selectivity filter element; it reads TVGYGD. The stretch at 424–431 is an intramembrane region; sequence TVGYGDMV. The Extracellular segment spans residues 432-438; it reads PRSTPGQ. Residues 439-467 form a helical membrane-spanning segment; that stretch reads VVALSSILSGILLMAFPVTSIFHTFSRSY. The Cytoplasmic segment spans residues 468-513; the sequence is LELKQEQERVMFRRAQFLIKTKSQLSVSQDSDILFGSASSDTRDNN.

This sequence belongs to the potassium channel family. G (TC 1.A.1.2) subfamily. Kv6.1/KCNG1 sub-subfamily. In terms of assembly, heterotetramer with KCNB1. Heterotetramer with KCNB2. As to expression, expressed in brain and placenta, and at much lower levels in kidney and pancreas.

Its subcellular location is the cell membrane. In terms of biological role, regulatory alpha-subunit of the voltage-gated potassium (Kv) channel which, when coassembled with KCNB1 or KCNB2, can modulate their expression and their gating kinetics by acting on deactivation upon repolarization and inactivation during maintained depolarization. Potassium channel subunit that does not form functional channels by itself. This chain is Voltage-gated potassium channel regulatory subunit KCNG1, found in Homo sapiens (Human).